Reading from the N-terminus, the 393-residue chain is Lipid-A-disaccharide synthase (393 aa).

The protein belongs to the LpxB family.

The catalysed reaction is a lipid X + a UDP-2-N,3-O-bis[(3R)-3-hydroxyacyl]-alpha-D-glucosamine = a lipid A disaccharide + UDP + H(+). It functions in the pathway bacterial outer membrane biogenesis; LPS lipid A biosynthesis. In terms of biological role, condensation of UDP-2,3-diacylglucosamine and 2,3-diacylglucosamine-1-phosphate to form lipid A disaccharide, a precursor of lipid A, a phosphorylated glycolipid that anchors the lipopolysaccharide to the outer membrane of the cell. This is Lipid-A-disaccharide synthase from Actinobacillus pleuropneumoniae serotype 3 (strain JL03).